Consider the following 141-residue polypeptide: Arsenate reductase (141 aa).

The active-site Nucleophile; cysteine thioarsenate intermediate is C12.

Belongs to the ArsC family. Monomer in solution.

It catalyses the reaction [glutaredoxin]-dithiol + arsenate + glutathione + H(+) = glutathionyl-S-S-[glutaredoxin] + arsenite + H2O. Inhibited by the thiol reagents iodoacetate (IAA) and N-ethylmaleimide (NEM). Activity is rapidly inactivated by the histidine-modifying reagent diethylpyrocarbonate (DEPC). Functionally, involved in resistance to arsenate. Catalyzes the reduction of arsenate [As(V)] to arsenite [As(III)]. The resulting arsenite is then extruded from the cell via the ArsAB transport system. In Escherichia coli, this protein is Arsenate reductase.